A 429-amino-acid chain; its full sequence is Histidine--tRNA ligase (429 aa).

The protein belongs to the class-II aminoacyl-tRNA synthetase family. In terms of assembly, homodimer.

It is found in the cytoplasm. The enzyme catalyses tRNA(His) + L-histidine + ATP = L-histidyl-tRNA(His) + AMP + diphosphate + H(+). This Streptococcus pneumoniae (strain 70585) protein is Histidine--tRNA ligase.